The chain runs to 1552 residues: Nonribosomal peptide synthetase acrB (1552 aa).

Residues 129–564 (ASFAQERIWF…PVANLAIFDE (436 aa)) are condensation. The segment at 594–999 (RHCKAHPRDV…RMEGSAQVKI (406 aa)) is adenylation. Residues 1110-1186 (APLGVEEEVM…AMARLLQPQE (77 aa)) enclose the Carrier domain. At S1146 the chain carries O-(pantetheine 4'-phosphoryl)serine. The interval 1226–1464 (LTGATGFLGR…DFVGVDAVAS (239 aa)) is thiolester reductase (R) domain.

This sequence belongs to the NRP synthetase family.

It functions in the pathway secondary metabolite biosynthesis. In terms of biological role, nonribosomal peptide synthetase; part of the cluster that mediates the biosynthesis of acurin A, a highly reduced polyketide coupled to a serine via a peptide bond. The activities of the highly reducing polyketide synthase acrA and the nonribosomal peptide synthetase acrB are collectively responsible for the synthesis of the acurin A core structure with a heptaketide backbone produced by acrA covalently fused to a L-serine by acrB. After the formation of the PK-NRP hybrid product, it is detached from acrB by reductive release to set up the formation of the lactam ring by aldol condensation. The hydrolyase acrC then catalyzes water loss to generate a double bond in the ring. This double bond is probably reduced, which is followed by three oxidations at C-22 to generate the carboxylic acid moiety, involving probably the FAD-binding monooxygenase acrE and the cytochrome P450 monooxygenases acrD and acrF. Finally, a last methylation step performed by the O-methyltransferase acrG leads to the production of acurin A. The chain is Nonribosomal peptide synthetase acrB from Aspergillus aculeatus (strain ATCC 16872 / CBS 172.66 / WB 5094).